Reading from the N-terminus, the 290-residue chain is Small ribosomal subunit protein bS6 (290 aa).

The segment at 208–233 (VEEAKTTAKKPAAPKMSAAERAKVDG) is disordered.

Belongs to the bacterial ribosomal protein bS6 family.

In terms of biological role, binds together with bS18 to 16S ribosomal RNA. The sequence is that of Small ribosomal subunit protein bS6 from Mesoplasma florum (strain ATCC 33453 / NBRC 100688 / NCTC 11704 / L1) (Acholeplasma florum).